The following is a 349-amino-acid chain: Protein RecA (349 aa).

67 to 74 contacts ATP; the sequence is GPESSGKT.

This sequence belongs to the RecA family.

Its subcellular location is the cytoplasm. In terms of biological role, can catalyze the hydrolysis of ATP in the presence of single-stranded DNA, the ATP-dependent uptake of single-stranded DNA by duplex DNA, and the ATP-dependent hybridization of homologous single-stranded DNAs. It interacts with LexA causing its activation and leading to its autocatalytic cleavage. This Chlamydia abortus (strain DSM 27085 / S26/3) (Chlamydophila abortus) protein is Protein RecA.